A 403-amino-acid chain; its full sequence is Protein LAZ1 homolog 2 (403 aa).

Helical transmembrane passes span 16–36 (SLIIGGSFATVAICLSLYSIL), 50–70 (WIVSVLFMVPVYATESIISLS), 162–182 (MILKTFCAFLTFLLELLGVYG), 191–211 (GYPYIVVVLNFSQMWALFCLV), 236–256 (IVFATWWQGFGIALLCYYGIL), and 269–289 (FLICIEMAIAAVAHLFVFPAE). The tract at residues 381–403 (SDGKEETEVTEEVTVETSVPPKE) is disordered.

The protein belongs to the TMEM184 family.

Its subcellular location is the membrane. This Arabidopsis thaliana (Mouse-ear cress) protein is Protein LAZ1 homolog 2.